The following is a 332-amino-acid chain: MTLINYKAADQKEVQLRYDWSFSEVESLLQKPLMDLLWDAQRVHRLTNPGYKVQLASLLSVKTGGCEEDCAYCSQSIHNSSDITSYSDFEVEEVLKRAKTAKDAGADRFCMGWAWREIRDGQPFESMLKMVRGVRDLGMEACVTAGMLTDNQALRLAEAGLTAYNHNLDTSPENYDQIITTRTYQERIETLERVRSAGITLCTGGIIGLGESLKDRASLLKVLANMSPHPESVPINALVAVEGTPLQDLPSIDPIEMVRMVATARILMPLSRVRLSAGREQLGDEAQILCFLAGADSIFYGDTLLTTSNPAIQADRELLSKAGVQVNWSLHE.

Positions 51–279 (YKVQLASLLS…LSRVRLSAGR (229 aa)) constitute a Radical SAM core domain. Residues Cys-66, Cys-70, and Cys-73 each contribute to the [4Fe-4S] cluster site. Cys-110, Cys-142, Cys-202, and Arg-274 together coordinate [2Fe-2S] cluster.

Belongs to the radical SAM superfamily. Biotin synthase family. In terms of assembly, homodimer. The cofactor is [4Fe-4S] cluster. [2Fe-2S] cluster serves as cofactor.

It carries out the reaction (4R,5S)-dethiobiotin + (sulfur carrier)-SH + 2 reduced [2Fe-2S]-[ferredoxin] + 2 S-adenosyl-L-methionine = (sulfur carrier)-H + biotin + 2 5'-deoxyadenosine + 2 L-methionine + 2 oxidized [2Fe-2S]-[ferredoxin]. Its pathway is cofactor biosynthesis; biotin biosynthesis; biotin from 7,8-diaminononanoate: step 2/2. Catalyzes the conversion of dethiobiotin (DTB) to biotin by the insertion of a sulfur atom into dethiobiotin via a radical-based mechanism. This chain is Biotin synthase, found in Prochlorococcus marinus (strain MIT 9211).